Here is a 620-residue protein sequence, read N- to C-terminus: uncharacterized protein (620 aa).

In terms of domain architecture, Radical SAM core spans 324–586 (RRYVTIAIIK…HPWEKGIYPT (263 aa)). [4Fe-4S] cluster-binding residues include Cys-338, Cys-342, and Cys-345. Lys-552 is subject to N6-(pyridoxal phosphate)lysine.

Belongs to the radical SAM superfamily. KamA family. Requires [4Fe-4S] cluster as cofactor. It depends on pyridoxal 5'-phosphate as a cofactor.

This is an uncharacterized protein from Methanocaldococcus jannaschii (strain ATCC 43067 / DSM 2661 / JAL-1 / JCM 10045 / NBRC 100440) (Methanococcus jannaschii).